We begin with the raw amino-acid sequence, 143 residues long: Transcriptional regulator MraZ (143 aa).

SpoVT-AbrB domains are found at residues 5–47 and 76–119; these read TYTP…PREE and TDEQ…DAQA.

This sequence belongs to the MraZ family. As to quaternary structure, forms oligomers.

It localises to the cytoplasm. Its subcellular location is the nucleoid. In Rhodococcus jostii (strain RHA1), this protein is Transcriptional regulator MraZ.